The sequence spans 1110 residues: MGKFYYSNRRLACWAAGKNPHLGGSVEQWLAAINTDSSFRQTVKEDVQDNREQPTAIRMFSWKVGFGPIDNPEKCDWHFVLTGERPAQPTRPVKADEVVVVPQLKKVVIPSPPPPPAVYFRAVGAFAPTRSGFIRATVERLSREREESRAAALFAELPLEYPQGAPLKLSLAMKFAMLKHTTWRKWYDTSDERLSEAHPGGPCLPPPPPIQNPPFFQERVREFCRMKSCARAFALETSLGLNRAWVGLVDIPSTSVCCADGRTTGGQTIAQEADPLQHRVSTSVAPGRAQWISERRQALRRREQANSLQGLAAQTDMTFEQARNAYLGAADMIEQGLPLLPPLRSAYAPRGLWRGPSTRANYTLDFRLNGIPTGTNTLEILYNPVSEEEMEEYRDRGMSAVVIDALEIAINPFGMPGNPTDLTVVATYGHERDMTRAFIGSASTFLGNGLARAIFFPGLQYSQEEPRRESIIRLYVASTNATVDTDSVLAAISVGTLRQHVGSMHYRTVASTVHQAQVQGTTLRATMMGNTVVVSPEGSLVTGTPEARVEIGGGSSIRMVGPLQWESVEEPGQTFSIRSRSRSVRIDRNVDLPQLEAEPRLSSTVRGLAGRGVVYIPKDCQANRYLGTLNIRDMISDFKGVQYEKWITAGLVMPTFKIVIRLPANAFTGLTWVMSFDAYNRITSRITTSADPVYTLSVPHWLIHHKLGTFSCEIDYGELCGHAMWFKSTTFESPKLHFTCLTGNNKELAADWQAVVELYAELEEASSFLGKPTLVFDPGVFNGKFQFLTCPPIFFDLTAVTALKSAGLTLGQVPMVGTTKVYNLNSALVSCVLGMGGTIRGRVHICAPIFYSIVLWVVSEWNGTTMDWNELFKYPGVYVEEDGSFEVKIRSPYHRTPARLLAGQSQRDMSSLNFYAIAGPIAPSGETARLPIVVQIDEIVRPDLALPSFEDDYFVWVDFSEFTLDKEELEIGSRFFDFTSSTCRVIMGENPFAAMIACHGLHSGVLDLKLQWSLNTDFGKSSGSVTVTKLVGDKATGLDGPSQVFAIQKLEGVTDLLIGNFAGANPNTHFSLYSRWMAIKLDQAKSIKVLRVLCKPRPGFSFYGRTSFPV.

It belongs to the nepoviruses RNA2 polyprotein family. In terms of processing, specific enzymatic cleavages in vivo by the P1 encoded 3C-like protease yield mature proteins.

It is found in the host cell junction. It localises to the host plasmodesma. The protein localises to the host cytoplasm. Its subcellular location is the host nucleus. The protein resides in the virion. Functionally, implicated in RNA2 replication. Could also be required for nematode transmission of the virus. Its function is as follows. Transports viral genome to neighboring plant cells directly through plasmosdesmata, without any budding. The movement protein allows efficient cell to cell propagation, by bypassing the host cell wall barrier. Acts by forming a tubular structure at the host plasmodesmata, enlarging it enough to allow free passage of virion capsids. The chain is RNA2 polyprotein from Vitis vinifera (Grape).